A 387-amino-acid chain; its full sequence is Succinate--CoA ligase [ADP-forming] subunit beta (387 aa).

Positions 9–245 (KDLLESYGLK…KSQENAKELK (237 aa)) constitute an ATP-grasp domain. ATP-binding positions include Lys46, 53–55 (GRG), Glu100, Tyr103, and Glu108. 2 residues coordinate Mg(2+): Asn200 and Asp214. Substrate contacts are provided by residues Asn265 and 322 to 324 (GIV).

The protein belongs to the succinate/malate CoA ligase beta subunit family. In terms of assembly, heterotetramer of two alpha and two beta subunits. The cofactor is Mg(2+).

It catalyses the reaction succinate + ATP + CoA = succinyl-CoA + ADP + phosphate. It carries out the reaction GTP + succinate + CoA = succinyl-CoA + GDP + phosphate. It participates in carbohydrate metabolism; tricarboxylic acid cycle; succinate from succinyl-CoA (ligase route): step 1/1. Its function is as follows. Succinyl-CoA synthetase functions in the citric acid cycle (TCA), coupling the hydrolysis of succinyl-CoA to the synthesis of either ATP or GTP and thus represents the only step of substrate-level phosphorylation in the TCA. The beta subunit provides nucleotide specificity of the enzyme and binds the substrate succinate, while the binding sites for coenzyme A and phosphate are found in the alpha subunit. The sequence is that of Succinate--CoA ligase [ADP-forming] subunit beta from Francisella tularensis subsp. mediasiatica (strain FSC147).